Here is a 122-residue protein sequence, read N- to C-terminus: Large ribosomal subunit protein uL14 (122 aa).

It belongs to the universal ribosomal protein uL14 family. Part of the 50S ribosomal subunit. Forms a cluster with proteins L3 and L19. In the 70S ribosome, L14 and L19 interact and together make contacts with the 16S rRNA in bridges B5 and B8.

In terms of biological role, binds to 23S rRNA. Forms part of two intersubunit bridges in the 70S ribosome. This chain is Large ribosomal subunit protein uL14, found in Streptomyces griseus subsp. griseus (strain JCM 4626 / CBS 651.72 / NBRC 13350 / KCC S-0626 / ISP 5235).